The primary structure comprises 555 residues: Carboxysome assembly protein CcmM (555 aa).

The tract at residues 1-209 is has carbonic anhydrase (CA) activity; it reads MAVRSTAAPP…CIAPLRNDQV (209 aa). The Proton donor/acceptor role is filled by E56. Zn(2+)-binding residues include H75, H102, and H107. C194 and C200 form a disulfide bridge. The interval 223–315 is rbcS-like repeat 1, SSUL1; the sequence is SSEVASNSLG…RVLETIIQRP (93 aa). 2 disordered regions span residues 323–351 and 441–464; these read TSFK…SNGA and NGQV…SGTA. Low complexity-rich tracts occupy residues 330 to 351 and 445 to 464; these read SNTN…SNGA and APSS…SGTA. Residues 347–440 are rbcS-like repeat 2, SSUL2; it reads YSNGATSGKV…RVLESIIQRP (94 aa). Residues 460–555 form a rbcS-like repeat 3, SSUL3 region; it reads SSGTATATAT…RVLETIIQRP (96 aa).

Belongs to the gamma-class carbonic anhydrase family. Probable homotrimer; zinc is bound between adjacent monomers. Full length protein (M58) interacts with CcmN. The C-terminal RbcS-like domains (SSUL) bind to holo-RuBisCO, as does the M35 short form. It depends on Zn(2+) as a cofactor. In terms of processing, the first amino acid of the short form (equivalent to Val-226) is not seen in Edman degradation, while Ser-230 may be post-translationally modified. Migrates in gels as 2 about equal forms of about 60 and 35 kDa (called M58 and M35). They are probably the result of alternative translation initiation.

The protein localises to the carboxysome. It is found in the cytoplasm. It carries out the reaction hydrogencarbonate + H(+) = CO2 + H2O. With respect to regulation, carbonic anhydrase (CA) activity is probably under redox control to remain inactive in the cytoplasm. Carbonic anhydrase (CA) activity of full-length protein and N-terminal fragment is inhibited by ethoxyzolamide. N-terminal fragment CA activity is activated under oxidizing conditions and inhibited under reducing conditions. In terms of biological role, functions as a scaffold protein for the assembly of beta-carboxysomes, initiates carboxysome assembly by coalescing RuBisCO (ribulose bisphosphate carboxylase, rbcL-rbcS). Produced as a full-length (M58) and a short form (M35), possibly by alternative translation initiation; probably both forms are required for correct carboxysome assembly and growth. In this strain both forms are equally abundant. A moderately active carbonic anhydrase that catalyzes the reversible hydration of carbon dioxide. Essential to photosynthetic carbon dioxide fixation, supplies CO(2) to ribulose bisphosphate carboxylase (RuBisCO) in the carboxysome. Also hydrolyzes COS. Functionally, beta-carboxysome assembly initiates when soluble RuBisCO is condensed into a liquid matrix in a pre-carboxysome by the RbcS-like domains of probably both forms of CcmM. CcmN interacts with the N-terminus of full length CcmM, and then recruits the shell proteins (CcmK) via CcmN's encapsulation peptide. Shell formation requires both CcmK proteins and CcmO. CcmL caps the otherwise elongated carboxysome. Once fully encapsulated carboxysomes are formed, they migrate within the cell probably via interactions with the cytoskeleton. This Nostoc sp. (strain PCC 7120 / SAG 25.82 / UTEX 2576) protein is Carboxysome assembly protein CcmM.